The sequence spans 75 residues: Protein SlyX homolog (75 aa).

The protein belongs to the SlyX family.

The polypeptide is Protein SlyX homolog (Chromobacterium violaceum (strain ATCC 12472 / DSM 30191 / JCM 1249 / CCUG 213 / NBRC 12614 / NCIMB 9131 / NCTC 9757 / MK)).